The sequence spans 444 residues: UDP-N-acetylmuramoylalanine--D-glutamate ligase (444 aa).

ATP is bound at residue 113–119 (GSNGKST).

It belongs to the MurCDEF family.

It is found in the cytoplasm. It carries out the reaction UDP-N-acetyl-alpha-D-muramoyl-L-alanine + D-glutamate + ATP = UDP-N-acetyl-alpha-D-muramoyl-L-alanyl-D-glutamate + ADP + phosphate + H(+). The protein operates within cell wall biogenesis; peptidoglycan biosynthesis. Functionally, cell wall formation. Catalyzes the addition of glutamate to the nucleotide precursor UDP-N-acetylmuramoyl-L-alanine (UMA). The polypeptide is UDP-N-acetylmuramoylalanine--D-glutamate ligase (Blochmanniella floridana).